The primary structure comprises 217 residues: Adenylate kinase (217 aa).

ATP is bound at residue 10-15; sequence GAGKGT. The tract at residues 30–59 is NMP; it reads STGEILRAAVKSKTPMGVKAKEYMDQGALV. Residues threonine 31, arginine 36, 57–59, 85–88, and glutamine 92 contribute to the AMP site; these read ALV and GFPR. An LID region spans residues 126-163; it reads GRRVCRACGRAFHVKFDPPLVDGVCDACGGELYQRDDD. Arginine 127 is an ATP binding site. Cysteine 130, cysteine 133, cysteine 150, and cysteine 153 together coordinate Zn(2+). Residues arginine 160 and arginine 171 each contribute to the AMP site. Residue glutamate 199 participates in ATP binding.

It belongs to the adenylate kinase family. Monomer.

The protein resides in the cytoplasm. It carries out the reaction AMP + ATP = 2 ADP. It participates in purine metabolism; AMP biosynthesis via salvage pathway; AMP from ADP: step 1/1. Catalyzes the reversible transfer of the terminal phosphate group between ATP and AMP. Plays an important role in cellular energy homeostasis and in adenine nucleotide metabolism. The polypeptide is Adenylate kinase (Geobacter sulfurreducens (strain ATCC 51573 / DSM 12127 / PCA)).